Here is a 446-residue protein sequence, read N- to C-terminus: Dihydroorotate dehydrogenase (quinone), mitochondrial (446 aa).

The transit peptide at 1 to 13 (MHSRPLPTLGRHA) directs the protein to the mitochondrion. A helical membrane pass occupies residues 40 to 57 (AILYTAGILGGAFAGYYL). FMN-binding positions include 125-129 (AGLDK) and Ser-149. Lys-129 provides a ligand contact to substrate. 174–178 (NRYGF) contacts substrate. Residues Asn-222 and Asn-252 each contribute to the FMN site. Substrate-binding positions include Asn-252 and 252–257 (NVSSPN). The Nucleophile role is filled by Ser-255. FMN contacts are provided by Lys-303 and Ser-331. Substrate is bound at residue 332-333 (NT). Residues Gly-357, Gly-387, and 408-409 (YT) each bind FMN.

Belongs to the dihydroorotate dehydrogenase family. Type 2 subfamily. The cofactor is FMN.

It localises to the mitochondrion inner membrane. The enzyme catalyses (S)-dihydroorotate + a quinone = orotate + a quinol. Its pathway is pyrimidine metabolism; UMP biosynthesis via de novo pathway; orotate from (S)-dihydroorotate (quinone route): step 1/1. With respect to regulation, the activity is dependent of the presence of oxygen. Its function is as follows. Catalyzes the conversion of dihydroorotate to orotate with quinone as electron acceptor. The polypeptide is Dihydroorotate dehydrogenase (quinone), mitochondrial (URA9) (Lachancea kluyveri (strain ATCC 58438 / CBS 3082 / BCRC 21498 / NBRC 1685 / JCM 7257 / NCYC 543 / NRRL Y-12651) (Yeast)).